Reading from the N-terminus, the 191-residue chain is MRYLRSSLFLFLLLLLVTGLAYPLLTTVLAQWLFPTQANGSLIYRDNAVVGSSLIGQSFSRTGYFQGRPSATSDAPYNALASGGSNLAASNPALDKQIGERAAYWHQAVSNQQPIPAELLTASGSGLDPQISPEAARYQALYVAQARGMSLQQIQQLIDRFTETSKPTFIGQPTVNVLLLNLALDEEKPLP.

Residues 8-28 (LFLFLLLLLVTGLAYPLLTTV) traverse the membrane as a helical segment.

It belongs to the KdpC family. As to quaternary structure, the system is composed of three essential subunits: KdpA, KdpB and KdpC.

Its subcellular location is the cell inner membrane. Functionally, part of the high-affinity ATP-driven potassium transport (or Kdp) system, which catalyzes the hydrolysis of ATP coupled with the electrogenic transport of potassium into the cytoplasm. This subunit acts as a catalytic chaperone that increases the ATP-binding affinity of the ATP-hydrolyzing subunit KdpB by the formation of a transient KdpB/KdpC/ATP ternary complex. This chain is Potassium-transporting ATPase KdpC subunit, found in Pectobacterium atrosepticum (strain SCRI 1043 / ATCC BAA-672) (Erwinia carotovora subsp. atroseptica).